Here is a 252-residue protein sequence, read N- to C-terminus: C4b-binding protein beta chain (252 aa).

The signal sequence occupies residues 1–17 (MFFWCACCLMVAWRVSA). Sushi domains lie at 21-78 (EHCP…ECRL), 79-136 (GHCP…ICKS), and 137-193 (RDCD…VCKL). Disulfide bonds link Cys-23–Cys-63, Cys-49–Cys-76, Cys-81–Cys-121, Cys-107–Cys-134, Cys-139–Cys-179, and Cys-165–Cys-191. 5 N-linked (GlcNAc...) asparagine glycosylation sites follow: Asn-64, Asn-71, Asn-98, Asn-117, and Asn-154.

In terms of assembly, disulfide-linked complex of alpha and beta chains of 3 possible sorts: a 570 kDa complex of 7 alpha chains and 1 beta chain, a 530 kDa homoheptamer of alpha chains or a 500 kDa complex of 6 alpha chains and 1 beta chain. The central body of the alpha chain homomer supports tentacles, each with the binding site for C4b at the end.

Its subcellular location is the secreted. In terms of biological role, controls the classical pathway of complement activation. It binds as a cofactor to C3b/C4b inactivator (C3bINA), which then hydrolyzes the complement fragment C4b. It also accelerates the degradation of the C4bC2a complex (C3 convertase) by dissociating the complement fragment C2a. It also interacts with anticoagulant protein S and with serum amyloid P component. The beta chain binds protein S. This Homo sapiens (Human) protein is C4b-binding protein beta chain (C4BPB).